The chain runs to 92 residues: Small ribosomal subunit protein uS19c (92 aa).

Belongs to the universal ribosomal protein uS19 family.

It is found in the plastid. It localises to the chloroplast. Protein S19 forms a complex with S13 that binds strongly to the 16S ribosomal RNA. This chain is Small ribosomal subunit protein uS19c, found in Nicotiana sylvestris (Wood tobacco).